Here is a 368-residue protein sequence, read N- to C-terminus: D-Ala-D/L-Ala epimerase (368 aa).

Substrate-binding positions include threonine 135 and lysine 160–lysine 162. Mg(2+) contacts are provided by aspartate 190, glutamate 216, and aspartate 241. Substrate contacts are provided by residues lysine 265 and aspartate 318–aspartate 320.

This sequence belongs to the mandelate racemase/muconate lactonizing enzyme family. The cofactor is Mg(2+).

Catalyzes the epimerization of D-Ala-D-Ala to D-Ala-L-Ala. Has broad substrate specificity and catalyzes the epimerization of a variety of dipeptides containing an N-terminal Ala followed by a hydrophobic or polar residue, such as Val, Ser and Met (in vitro). The protein is D-Ala-D/L-Ala epimerase (tfdD) of Cytophaga hutchinsonii (strain ATCC 33406 / DSM 1761 / CIP 103989 / NBRC 15051 / NCIMB 9469 / D465).